We begin with the raw amino-acid sequence, 681 residues long: Probable L-type lectin-domain containing receptor kinase VII.2 (681 aa).

Residues 1-23 form the signal peptide; sequence MFSKVSILLFSLASLLLFRSTTG. A legume-lectin like region spans residues 24–260; that stretch reads IEFIYNSNFT…SHRILSWSFS (237 aa). The Extracellular portion of the chain corresponds to 24–290; the sequence is IEFIYNSNFT…SGDSVLKSKG (267 aa). N-linked (GlcNAc...) asparagine glycans are attached at residues asparagine 31, asparagine 42, asparagine 56, asparagine 72, asparagine 126, asparagine 202, asparagine 207, asparagine 228, and asparagine 263. The helical transmembrane segment at 291-311 threads the bilayer; that stretch reads FIAGVSSGVVLLVSVIGLLCF. Over 312 to 681 the chain is Cytoplasmic; the sequence is YVVRRRRQRL…QTYDSILHGR (370 aa). Residues 349-624 form the Protein kinase domain; it reads FSDENMIGYG…VVQILEQGRL (276 aa). ATP is bound by residues 355 to 363 and lysine 376; that span reads IGYGGNSKV. Aspartate 475 serves as the catalytic Proton acceptor.

This sequence in the C-terminal section; belongs to the protein kinase superfamily. Ser/Thr protein kinase family. It in the N-terminal section; belongs to the leguminous lectin family.

It is found in the cell membrane. The enzyme catalyses L-seryl-[protein] + ATP = O-phospho-L-seryl-[protein] + ADP + H(+). It carries out the reaction L-threonyl-[protein] + ATP = O-phospho-L-threonyl-[protein] + ADP + H(+). This is Probable L-type lectin-domain containing receptor kinase VII.2 (LECRK72) from Arabidopsis thaliana (Mouse-ear cress).